The sequence spans 499 residues: Probable aspartyl protease At4g16563 (499 aa).

Positions 1–26 are cleaved as a signal peptide; sequence MKTCLIFFLYTTILQYYFHFSVSSLS. Positions 83–487 constitute a Peptidase A1 domain; sequence YLISLSVGSS…DLLNRRVGFA (405 aa). Residue aspartate 101 is part of the active site. Cysteine 111 and cysteine 119 are joined by a disulfide. Residues asparagine 175 and asparagine 211 are each glycosylated (N-linked (GlcNAc...) asparagine). Aspartate 353 is a catalytic residue. An intrachain disulfide couples cysteine 396 to cysteine 445. 2 N-linked (GlcNAc...) asparagine glycosylation sites follow: asparagine 400 and asparagine 415.

The protein belongs to the peptidase A1 family.

The polypeptide is Probable aspartyl protease At4g16563 (Arabidopsis thaliana (Mouse-ear cress)).